The chain runs to 382 residues: Mannitol-1-phosphate 5-dehydrogenase (382 aa).

3–14 contributes to the NAD(+) binding site; the sequence is VLHFGAGNIGRG.

Belongs to the mannitol dehydrogenase family.

It catalyses the reaction D-mannitol 1-phosphate + NAD(+) = beta-D-fructose 6-phosphate + NADH + H(+). In Sodalis glossinidius (strain morsitans), this protein is Mannitol-1-phosphate 5-dehydrogenase.